A 110-amino-acid chain; its full sequence is UPF0122 protein gbs1018 (110 aa).

Belongs to the UPF0122 family.

Functionally, might take part in the signal recognition particle (SRP) pathway. This is inferred from the conservation of its genetic proximity to ftsY/ffh. May be a regulatory protein. In Streptococcus agalactiae serotype III (strain NEM316), this protein is UPF0122 protein gbs1018.